Here is a 469-residue protein sequence, read N- to C-terminus: Argininosuccinate lyase (469 aa).

Belongs to the lyase 1 family. Argininosuccinate lyase subfamily.

Its subcellular location is the cytoplasm. The enzyme catalyses 2-(N(omega)-L-arginino)succinate = fumarate + L-arginine. Its pathway is amino-acid biosynthesis; L-arginine biosynthesis; L-arginine from L-ornithine and carbamoyl phosphate: step 3/3. This chain is Argininosuccinate lyase, found in Mycolicibacterium smegmatis (strain ATCC 700084 / mc(2)155) (Mycobacterium smegmatis).